The following is a 473-amino-acid chain: Biotin-dependent acetyl-/propionyl-coenzyme A carboxylase beta6 subunit (473 aa).

The region spanning 1–224 is the CoA carboxyltransferase N-terminal domain; it reads MTIMAPEAVG…QGHFDRSKAE (224 aa). The CoA carboxyltransferase C-terminal domain occupies 225–473; sequence AGDTDIHALL…RRGRHKNIPL (249 aa).

This sequence belongs to the AccD/PCCB family. As to quaternary structure, the biotin-dependent acyl-CoA carboxylase complex is composed of AccA3, which contains the biotin carboxylase (BC) and biotin carboxyl carrier protein (BCCP) domains, and AccD6, which contains the carboxyl transferase (CT) domain.

The catalysed reaction is N(6)-carboxybiotinyl-L-lysyl-[protein] + acetyl-CoA = N(6)-biotinyl-L-lysyl-[protein] + malonyl-CoA. It carries out the reaction N(6)-carboxybiotinyl-L-lysyl-[protein] + propanoyl-CoA = methylmalonyl-CoA + N(6)-biotinyl-L-lysyl-[protein]. The protein operates within lipid metabolism; fatty acid biosynthesis. It participates in lipid metabolism; mycolic acid biosynthesis. In terms of biological role, component of a biotin-dependent acyl-CoA carboxylase complex. This subunit transfers the CO2 from carboxybiotin to the CoA ester substrate. When associated with the alpha3 subunit AccA3, is involved in the carboxylation of acetyl-CoA and propionyl-CoA. The polypeptide is Biotin-dependent acetyl-/propionyl-coenzyme A carboxylase beta6 subunit (accD6) (Mycobacterium bovis (strain ATCC BAA-935 / AF2122/97)).